The following is a 333-amino-acid chain: Lipoyl synthase (333 aa).

Residues 1–15 (MSTLVESPVPSNDSQ) show a composition bias toward polar residues. The disordered stretch occupies residues 1–34 (MSTLVESPVPSNDSQAAAPAAYDPTQKQKSQAKT). The [4Fe-4S] cluster site is built by C80, C85, C91, C106, C110, C113, and S320. One can recognise a Radical SAM core domain in the interval 91–309 (CFGKGTATFM…EREAYAMGFT (219 aa)).

This sequence belongs to the radical SAM superfamily. Lipoyl synthase family. [4Fe-4S] cluster is required as a cofactor.

The protein localises to the cytoplasm. It catalyses the reaction [[Fe-S] cluster scaffold protein carrying a second [4Fe-4S](2+) cluster] + N(6)-octanoyl-L-lysyl-[protein] + 2 oxidized [2Fe-2S]-[ferredoxin] + 2 S-adenosyl-L-methionine + 4 H(+) = [[Fe-S] cluster scaffold protein] + N(6)-[(R)-dihydrolipoyl]-L-lysyl-[protein] + 4 Fe(3+) + 2 hydrogen sulfide + 2 5'-deoxyadenosine + 2 L-methionine + 2 reduced [2Fe-2S]-[ferredoxin]. The protein operates within protein modification; protein lipoylation via endogenous pathway; protein N(6)-(lipoyl)lysine from octanoyl-[acyl-carrier-protein]: step 2/2. In terms of biological role, catalyzes the radical-mediated insertion of two sulfur atoms into the C-6 and C-8 positions of the octanoyl moiety bound to the lipoyl domains of lipoate-dependent enzymes, thereby converting the octanoylated domains into lipoylated derivatives. This chain is Lipoyl synthase, found in Bordetella bronchiseptica (strain ATCC BAA-588 / NCTC 13252 / RB50) (Alcaligenes bronchisepticus).